An 82-amino-acid chain; its full sequence is Acyl carrier protein (82 aa).

In terms of domain architecture, Carrier spans 4–79 (PEMEARLKQI…DALNYIEQKL (76 aa)). At S39 the chain carries O-(pantetheine 4'-phosphoryl)serine.

This sequence belongs to the acyl carrier protein (ACP) family. Post-translationally, 4'-phosphopantetheine is transferred from CoA to a specific serine of apo-ACP by AcpS. This modification is essential for activity because fatty acids are bound in thioester linkage to the sulfhydryl of the prosthetic group.

It localises to the cytoplasm. It participates in lipid metabolism; fatty acid biosynthesis. Functionally, carrier of the growing fatty acid chain in fatty acid biosynthesis. The chain is Acyl carrier protein from Roseiflexus castenholzii (strain DSM 13941 / HLO8).